The following is a 508-amino-acid chain: uncharacterized protein (508 aa).

The chain crosses the membrane as a helical span at residues 7–29; it reads ALAIVLALILSLALPELLFQLYP.

It localises to the membrane. This is an uncharacterized protein from Archaeoglobus fulgidus (strain ATCC 49558 / DSM 4304 / JCM 9628 / NBRC 100126 / VC-16).